A 205-amino-acid polypeptide reads, in one-letter code: Glycerol-3-phosphate acyltransferase (205 aa).

A run of 5 helical transmembrane segments spans residues 4–24, 80–100, 107–127, 130–150, and 155–175; these read IAPGLVLLAYLCGSISSAILV, PFWLGLVAIAACVGHIWPVFF, GVATAFGAIAPIGLDLTGVMA, WLLTILLSGYSSLGAIVSALI, and VWWFKPQYTFPVSMLSCLILL.

The protein belongs to the PlsY family. In terms of assembly, probably interacts with PlsX.

The protein localises to the cell inner membrane. The enzyme catalyses an acyl phosphate + sn-glycerol 3-phosphate = a 1-acyl-sn-glycero-3-phosphate + phosphate. The protein operates within lipid metabolism; phospholipid metabolism. In terms of biological role, catalyzes the transfer of an acyl group from acyl-phosphate (acyl-PO(4)) to glycerol-3-phosphate (G3P) to form lysophosphatidic acid (LPA). This enzyme utilizes acyl-phosphate as fatty acyl donor, but not acyl-CoA or acyl-ACP. This is Glycerol-3-phosphate acyltransferase from Klebsiella pneumoniae subsp. pneumoniae (strain ATCC 700721 / MGH 78578).